The primary structure comprises 602 residues: Bifunctional lycopene cyclase/phytoene synthase (602 aa).

A lycopene beta-cyclase region spans residues 1 to 238 (MLTYMEVHLY…LVFASCATDR (238 aa)). Helical transmembrane passes span 7-27 (VHLY…KPFF), 35-55 (YIFL…YIVY), 69-89 (VIGY…LITV), 110-130 (PVFQ…TIAA), 142-162 (PFYG…LWIG), 173-193 (AVLF…QYAI), and 211-231 (LPSL…VLVF). Residues 245-602 (IYITPMNHNK…RGKSQAFTVI (358 aa)) are phytoene synthase.

In the N-terminal section; belongs to the lycopene beta-cyclase family. It in the C-terminal section; belongs to the phytoene/squalene synthase family.

Its subcellular location is the membrane. It catalyses the reaction all-trans-lycopene = gamma-carotene. The catalysed reaction is gamma-carotene = all-trans-beta-carotene. The enzyme catalyses 2 (2E,6E,10E)-geranylgeranyl diphosphate = 15-cis-phytoene + 2 diphosphate. It functions in the pathway carotenoid biosynthesis; beta-carotene biosynthesis. Its pathway is carotenoid biosynthesis; phytoene biosynthesis; all-trans-phytoene from geranylgeranyl diphosphate: step 1/1. Bifunctional enzyme that catalyzes the reactions from geranylgeranyl diphosphate to phytoene (phytoene synthase) and lycopene to beta-carotene via the intermediate gamma-carotene (lycopene cyclase). The sequence is that of Bifunctional lycopene cyclase/phytoene synthase from Phycomyces blakesleeanus (strain ATCC 8743b / DSM 1359 / FGSC 10004 / NBRC 33097 / NRRL 1555).